The primary structure comprises 329 residues: Serine/threonine-protein phosphatase PP1-alpha (329 aa).

4 residues coordinate Mn(2+): Asp-64, His-66, Asp-92, and Asn-124. Residue His-125 is the Proton donor of the active site. Mn(2+) is bound by residues His-173 and His-248. The segment at 309–329 (GMNSGRPAVGGGRPGTTAGKK) is disordered.

It belongs to the PPP phosphatase family. PP-1 subfamily. Interacts with lab-1; the interaction is direct. Interacts with knl-1; the interaction is direct. Mn(2+) serves as cofactor.

The enzyme catalyses O-phospho-L-seryl-[protein] + H2O = L-seryl-[protein] + phosphate. It carries out the reaction O-phospho-L-threonyl-[protein] + H2O = L-threonyl-[protein] + phosphate. Its function is as follows. Serine/threonine-protein phosphatase which antagonizes the function of air-2 in the regulation of chromosome cohesion. Dephosphorylates histone H3 at 'Ser-10'. Dephosphorylates translation initiation factor eIF2alpha. Involved in the activation of chloride channel clh-3 during cell swelling and meiotic maturation. The protein is Serine/threonine-protein phosphatase PP1-alpha (gsp-1) of Caenorhabditis briggsae.